A 234-amino-acid chain; its full sequence is Ubiquinone biosynthesis O-methyltransferase (234 aa).

Positions 36, 56, 77, and 125 each coordinate S-adenosyl-L-methionine.

The protein belongs to the methyltransferase superfamily. UbiG/COQ3 family.

The catalysed reaction is a 3-demethylubiquinol + S-adenosyl-L-methionine = a ubiquinol + S-adenosyl-L-homocysteine + H(+). It carries out the reaction a 3-(all-trans-polyprenyl)benzene-1,2-diol + S-adenosyl-L-methionine = a 2-methoxy-6-(all-trans-polyprenyl)phenol + S-adenosyl-L-homocysteine + H(+). It functions in the pathway cofactor biosynthesis; ubiquinone biosynthesis. Functionally, O-methyltransferase that catalyzes the 2 O-methylation steps in the ubiquinone biosynthetic pathway. The chain is Ubiquinone biosynthesis O-methyltransferase from Actinobacillus pleuropneumoniae serotype 5b (strain L20).